A 155-amino-acid chain; its full sequence is Small ribosomal subunit protein uS7 (155 aa).

It belongs to the universal ribosomal protein uS7 family. In terms of assembly, part of the 30S ribosomal subunit. Contacts proteins S9 and S11.

One of the primary rRNA binding proteins, it binds directly to 16S rRNA where it nucleates assembly of the head domain of the 30S subunit. Is located at the subunit interface close to the decoding center, probably blocks exit of the E-site tRNA. The protein is Small ribosomal subunit protein uS7 of Pelodictyon phaeoclathratiforme (strain DSM 5477 / BU-1).